The primary structure comprises 138 residues: Flagellar assembly factor FliW (138 aa).

This sequence belongs to the FliW family. As to quaternary structure, interacts with translational regulator CsrA and flagellin(s).

It localises to the cytoplasm. Acts as an anti-CsrA protein, binds CsrA and prevents it from repressing translation of its target genes, one of which is flagellin. Binds to flagellin and participates in the assembly of the flagellum. This Symbiobacterium thermophilum (strain DSM 24528 / JCM 14929 / IAM 14863 / T) protein is Flagellar assembly factor FliW.